A 146-amino-acid polypeptide reads, in one-letter code: Ribonuclease H (146 aa).

The RNase H type-1 domain maps to 1 to 141 (MEKIDIFTDG…ADALANRGVE (141 aa)). Mg(2+) contacts are provided by D9, E47, D69, and D133.

This sequence belongs to the RNase H family. Monomer. It depends on Mg(2+) as a cofactor.

It localises to the cytoplasm. It carries out the reaction Endonucleolytic cleavage to 5'-phosphomonoester.. Endonuclease that specifically degrades the RNA of RNA-DNA hybrids. The chain is Ribonuclease H from Herminiimonas arsenicoxydans.